Reading from the N-terminus, the 874-residue chain is Alanine--tRNA ligase (874 aa).

H563, H567, C665, and H669 together coordinate Zn(2+).

It belongs to the class-II aminoacyl-tRNA synthetase family. The cofactor is Zn(2+).

The protein resides in the cytoplasm. It carries out the reaction tRNA(Ala) + L-alanine + ATP = L-alanyl-tRNA(Ala) + AMP + diphosphate. In terms of biological role, catalyzes the attachment of alanine to tRNA(Ala) in a two-step reaction: alanine is first activated by ATP to form Ala-AMP and then transferred to the acceptor end of tRNA(Ala). Also edits incorrectly charged Ser-tRNA(Ala) and Gly-tRNA(Ala) via its editing domain. The protein is Alanine--tRNA ligase of Actinobacillus succinogenes (strain ATCC 55618 / DSM 22257 / CCUG 43843 / 130Z).